The primary structure comprises 365 residues: Ferrochelatase (365 aa).

2 residues coordinate Fe cation: His-211 and Glu-292.

The protein belongs to the ferrochelatase family.

The protein resides in the cytoplasm. It catalyses the reaction heme b + 2 H(+) = protoporphyrin IX + Fe(2+). The protein operates within porphyrin-containing compound metabolism; protoheme biosynthesis; protoheme from protoporphyrin-IX: step 1/1. Its function is as follows. Catalyzes the ferrous insertion into protoporphyrin IX. The chain is Ferrochelatase from Aromatoleum aromaticum (strain DSM 19018 / LMG 30748 / EbN1) (Azoarcus sp. (strain EbN1)).